We begin with the raw amino-acid sequence, 70 residues long: NAD(P)H-quinone oxidoreductase subunit L (70 aa).

2 helical membrane-spanning segments follow: residues Ile-2–Val-22 and Leu-39–Ala-59.

The protein belongs to the complex I NdhL subunit family. In terms of assembly, NDH-1 can be composed of about 15 different subunits; different subcomplexes with different compositions have been identified which probably have different functions.

The protein localises to the cellular thylakoid membrane. It carries out the reaction a plastoquinone + NADH + (n+1) H(+)(in) = a plastoquinol + NAD(+) + n H(+)(out). It catalyses the reaction a plastoquinone + NADPH + (n+1) H(+)(in) = a plastoquinol + NADP(+) + n H(+)(out). In terms of biological role, NDH-1 shuttles electrons from an unknown electron donor, via FMN and iron-sulfur (Fe-S) centers, to quinones in the respiratory and/or the photosynthetic chain. The immediate electron acceptor for the enzyme in this species is believed to be plastoquinone. Couples the redox reaction to proton translocation, and thus conserves the redox energy in a proton gradient. Cyanobacterial NDH-1 also plays a role in inorganic carbon-concentration. The sequence is that of NAD(P)H-quinone oxidoreductase subunit L from Nostoc punctiforme (strain ATCC 29133 / PCC 73102).